Reading from the N-terminus, the 263-residue chain is Exosome complex component Rrp4 (263 aa).

Residues 51–127 (GKYIPSRKDF…KAMKVELSMR (77 aa)) form the S1 motif domain. A KH domain is found at 135–196 (SKGRIIEVVP…DRLTTAIEMI (62 aa)). The segment at 213-263 (LRGEPEGTEGSDEEQLVDEEVAGVSLEDDDVTEETSRKVDVLLDNDTDETN) is disordered. Residues 218 to 245 (EGTEGSDEEQLVDEEVAGVSLEDDDVTE) show a composition bias toward acidic residues.

Belongs to the RRP4 family. Component of the archaeal exosome complex. Forms a trimer of Rrp4 and/or Csl4 subunits. The trimer associates with a hexameric ring-like arrangement composed of 3 Rrp41-Rrp42 heterodimers.

It localises to the cytoplasm. In terms of biological role, non-catalytic component of the exosome, which is a complex involved in RNA degradation. Increases the RNA binding and the efficiency of RNA degradation. Confers strong poly(A) specificity to the exosome. The polypeptide is Exosome complex component Rrp4 (Methanococcoides burtonii (strain DSM 6242 / NBRC 107633 / OCM 468 / ACE-M)).